The sequence spans 276 residues: Ribosomal RNA small subunit methyltransferase J (276 aa).

S-adenosyl-L-methionine-binding positions include glutamate 135–arginine 136 and aspartate 191.

Belongs to the methyltransferase superfamily. RsmJ family.

Its subcellular location is the cytoplasm. The catalysed reaction is guanosine(1516) in 16S rRNA + S-adenosyl-L-methionine = N(2)-methylguanosine(1516) in 16S rRNA + S-adenosyl-L-homocysteine + H(+). In terms of biological role, specifically methylates the guanosine in position 1516 of 16S rRNA. This is Ribosomal RNA small subunit methyltransferase J from Hydrogenovibrio crunogenus (strain DSM 25203 / XCL-2) (Thiomicrospira crunogena).